The primary structure comprises 589 residues: MTQLSEPVPVSLAARRSLWQRVARVWPYFSGSRAGWALAIGATIVASATEPFVPALLKPLLDRGFQRDSFNLWLVPLALMLLFTVRGLSGFLAQFALAKVTNDGLLKLRGAMFDKLLSARLTLFADQSSSAIANTVVYEVFNGSSMLINAIMKLARDVLTLLALIGYLVYLNWKLMLVVALLFPAVAFVIQVLSKRLYRLTKESQTATDDLAYVVEENVMAHRDVRLHGAQAGQASRFNHLSNSLRRLSMKSTAAYAGMSAITQVLAAMALSAVISIALLQSAENTTTVGGFVAFVTAMLLLIAPVKSLSDAATPVTRGLAALERGLDLMNLTPDESGGSFVKARAHGDIEFADVSVIYKADAAAALDQFSLSIKAGETLAIVGASGSGKTTLVNLLPRFVEMSSGNIYLDGQDLRAWNLASLRAQFAFVSQHVVMLNNSIAVNVALGQPVDRARVTECLAAANLSGLLAELPGGIDTILGHNAMQLSGGQRQRLAIARALYKNAPILVLDEATSALDTESELAVQEAIKRLTASRTSLVIAHRLSTVQHADRIIMMEAGRMIESGTHAELLARNGAYAHLYRLGFRNT.

Transmembrane regions (helical) follow at residues Ala-37–Leu-57, Leu-72–Leu-92, Ile-151–Leu-171, Trp-173–Leu-193, Ser-260–Leu-280, and Thr-286–Val-306. Residues Ala-37–Arg-318 form the ABC transmembrane type-1 domain. Residues Ile-350–Leu-584 enclose the ABC transporter domain. Gly-384–Thr-391 provides a ligand contact to ATP.

This sequence belongs to the ABC transporter superfamily. Lipid exporter (TC 3.A.1.106) family. In terms of assembly, homodimer.

It localises to the cell inner membrane. It carries out the reaction ATP + H2O + lipid A-core oligosaccharideSide 1 = ADP + phosphate + lipid A-core oligosaccharideSide 2.. Functionally, involved in lipopolysaccharide (LPS) biosynthesis. Translocates lipid A-core from the inner to the outer leaflet of the inner membrane. Transmembrane domains (TMD) form a pore in the inner membrane and the ATP-binding domain (NBD) is responsible for energy generation. The polypeptide is ATP-dependent lipid A-core flippase (Polaromonas sp. (strain JS666 / ATCC BAA-500)).